Consider the following 362-residue polypeptide: MPAVPADRPMHAVRIWLAIIAGLIAVMVLVGGATRLTESGLSIVEWKPITGTLPPLSVEQWTQAFDAYKTIPQYRELNAGMTLAQFKTIFWWEWSHRLLGRVIGAAFLLPFLWFLWRGDLGGGLKRRLWIIFGLGALQGAVGWWMVASGLSQRVEVSQVRLATHLVLALLIFAGIVWTLRQLTPRPAIVAPLRLRLTAAVLLGLTFVQLYLGALVAGLRAGRIYNTWPQIDGALIPSAARLWFEQPWWKNLFDNHLTVQFDHRMLAYALWALAVLHAIDAWRARAAAGGALALAVAITLQAALGIVTLLYAVPIGLGLAHQAMAILVLTLAVLQLARFSPGVVQTAQHAAAPSLGQPAQGRG.

5 helical membrane passes run 12 to 32 (AVRI…LVGG), 102 to 122 (VIGA…DLGG), 128 to 148 (LWII…MVAS), 159 to 179 (VRLA…VWTL), and 198 to 218 (AAVL…VAGL). Position 262 (histidine 262) interacts with heme. The next 3 membrane-spanning stretches (helical) occupy residues 264 to 281 (MLAY…IDAW), 289 to 309 (GALA…VTLL), and 312 to 332 (VPIG…TLAV). Histidine 320 provides a ligand contact to heme.

This sequence belongs to the COX15/CtaA family. Type 2 subfamily. In terms of assembly, interacts with CtaB. Heme b is required as a cofactor.

The protein resides in the cell membrane. It catalyses the reaction Fe(II)-heme o + 2 A + H2O = Fe(II)-heme a + 2 AH2. Its pathway is porphyrin-containing compound metabolism; heme A biosynthesis; heme A from heme O: step 1/1. Catalyzes the conversion of heme O to heme A by two successive hydroxylations of the methyl group at C8. The first hydroxylation forms heme I, the second hydroxylation results in an unstable dihydroxymethyl group, which spontaneously dehydrates, resulting in the formyl group of heme A. In Rhodopseudomonas palustris (strain BisB18), this protein is Heme A synthase.